Consider the following 760-residue polypeptide: General transcription and DNA repair factor IIH helicase subunit XPD (760 aa).

Positions 7-283 (GLLVYFPYDY…KETDEQRLRD (277 aa)) constitute a Helicase ATP-binding domain. 42–49 (MPSGTGKT) is an ATP binding site. [4Fe-4S] cluster-binding residues include cysteine 116, cysteine 134, cysteine 155, and cysteine 190. The DEAH box signature appears at 234-237 (DEAH). The interval 438–637 (MDASLAIKPV…TQSRILKARL (200 aa)) is mediates interaction with MMS19.

It belongs to the helicase family. RAD3/XPD subfamily. Component of the 7-subunit TFIIH core complex composed of XPB/ERCC3, XPD/ERCC2, GTF2H1, GTF2H2, GTF2H3, GTF2H4 and GTF2H5, which is active in NER. The core complex associates with the 3-subunit CDK-activating kinase (CAK) module composed of CCNH/cyclin H, CDK7 and MNAT1 to form the 10-subunit holoenzyme (holo-TFIIH) active in transcription. The interaction with GTF2H2 results in the stimulation of the 5'--&gt;3' helicase activity. Component of the MMXD complex, which includes CIAO1, ERCC2, CIAO2B, MMS19 and SLC25A5. Interacts with CIAO1 and CIAO2B; the interaction WITH CIAO2B is direct. Interacts with ATF7IP. Interacts directly with MMS19. Part of TBP-based Pol II pre-initiation complex (PIC), in which Pol II core assembles with general transcription factors and other specific initiation factors including GTF2E1, GTF2E2, GTF2F1, GTF2F2, TCEA1, ERCC2, ERCC3, GTF2H2, GTF2H3, GTF2H4, GTF2H5, GTF2A1, GTF2A2, GTF2B and TBP; this large multi-subunit PIC complex mediates DNA unwinding and targets Pol II core to the transcription start site where the first phosphodiester bond forms. Mg(2+) is required as a cofactor. [4Fe-4S] cluster serves as cofactor. Post-translationally, ISGylated.

It localises to the nucleus. The protein resides in the cytoplasm. The protein localises to the cytoskeleton. Its subcellular location is the spindle. It carries out the reaction Couples ATP hydrolysis with the unwinding of duplex DNA at the replication fork by translocating in the 5'-3' direction. This creates two antiparallel DNA single strands (ssDNA). The leading ssDNA polymer is the template for DNA polymerase III holoenzyme which synthesizes a continuous strand.. The catalysed reaction is ATP + H2O = ADP + phosphate + H(+). Its function is as follows. ATP-dependent 5'-3' DNA helicase, component of the general transcription and DNA repair factor IIH (TFIIH) core complex, which is involved in general and transcription-coupled nucleotide excision repair (NER) of damaged DNA and, when complexed to CDK-activating kinase (CAK), involved in transcription by RNA polymerase II. In NER, TFIIH acts by opening DNA around the lesion to allow the excision of the damaged oligonucleotide and its replacement by a new DNA fragment. The ATP-dependent helicase activity of XPD/ERCC2 is required for DNA opening. In transcription, TFIIH has an essential role in transcription initiation. When the pre-initiation complex (PIC) has been established, TFIIH is required for promoter opening and promoter escape. Phosphorylation of the C-terminal tail (CTD) of the largest subunit of RNA polymerase II by the kinase module CAK controls the initiation of transcription. XPD/ERCC2 acts by forming a bridge between CAK and the core-TFIIH complex. Involved in the regulation of vitamin-D receptor activity. As part of the mitotic spindle-associated MMXD complex it plays a role in chromosome segregation. Might have a role in aging process and could play a causative role in the generation of skin cancers. The sequence is that of General transcription and DNA repair factor IIH helicase subunit XPD (Ercc2) from Mus musculus (Mouse).